Reading from the N-terminus, the 418-residue chain is D-amino acid dehydrogenase (418 aa).

Residue 3-17 (VTILGAGVVGVTSAW) participates in FAD binding.

The protein belongs to the DadA oxidoreductase family. FAD serves as cofactor.

The enzyme catalyses a D-alpha-amino acid + A + H2O = a 2-oxocarboxylate + AH2 + NH4(+). The protein operates within amino-acid degradation; D-alanine degradation; NH(3) and pyruvate from D-alanine: step 1/1. In terms of biological role, oxidative deamination of D-amino acids. In Agrobacterium fabrum (strain C58 / ATCC 33970) (Agrobacterium tumefaciens (strain C58)), this protein is D-amino acid dehydrogenase.